The primary structure comprises 338 residues: Ketol-acid reductoisomerase (NADP(+)) (338 aa).

A KARI N-terminal Rossmann domain is found at 1–181 (MRVFYDKDCD…GGGRTGIIET (181 aa)). NADP(+) is bound by residues 24–27 (YGSQ), Arg-47, Ser-50, Thr-52, and 82–85 (DEFQ). Residue His-107 is part of the active site. Gly-133 contributes to the NADP(+) binding site. The region spanning 182 to 327 (TFKDETETDL…EKLRAMMPWI (146 aa)) is the KARI C-terminal knotted domain. Asp-190, Glu-194, Glu-226, and Glu-230 together coordinate Mg(2+). Residue Ser-251 participates in substrate binding.

This sequence belongs to the ketol-acid reductoisomerase family. The cofactor is Mg(2+).

It catalyses the reaction (2R)-2,3-dihydroxy-3-methylbutanoate + NADP(+) = (2S)-2-acetolactate + NADPH + H(+). The catalysed reaction is (2R,3R)-2,3-dihydroxy-3-methylpentanoate + NADP(+) = (S)-2-ethyl-2-hydroxy-3-oxobutanoate + NADPH + H(+). Its pathway is amino-acid biosynthesis; L-isoleucine biosynthesis; L-isoleucine from 2-oxobutanoate: step 2/4. It functions in the pathway amino-acid biosynthesis; L-valine biosynthesis; L-valine from pyruvate: step 2/4. Its function is as follows. Involved in the biosynthesis of branched-chain amino acids (BCAA). Catalyzes an alkyl-migration followed by a ketol-acid reduction of (S)-2-acetolactate (S2AL) to yield (R)-2,3-dihydroxy-isovalerate. In the isomerase reaction, S2AL is rearranged via a Mg-dependent methyl migration to produce 3-hydroxy-3-methyl-2-ketobutyrate (HMKB). In the reductase reaction, this 2-ketoacid undergoes a metal-dependent reduction by NADPH to yield (R)-2,3-dihydroxy-isovalerate. This chain is Ketol-acid reductoisomerase (NADP(+)), found in Pseudomonas paraeruginosa (strain DSM 24068 / PA7) (Pseudomonas aeruginosa (strain PA7)).